The chain runs to 285 residues: UPF0354 protein SH1179 (285 aa).

The protein belongs to the UPF0354 family.

The polypeptide is UPF0354 protein SH1179 (Staphylococcus haemolyticus (strain JCSC1435)).